The chain runs to 638 residues: Threonine--tRNA ligase (638 aa).

Residues methionine 1–threonine 61 form the TGS domain. The interval aspartate 243–proline 534 is catalytic. Zn(2+)-binding residues include cysteine 334, histidine 385, and histidine 511.

The protein belongs to the class-II aminoacyl-tRNA synthetase family. As to quaternary structure, homodimer. The cofactor is Zn(2+).

It localises to the cytoplasm. The catalysed reaction is tRNA(Thr) + L-threonine + ATP = L-threonyl-tRNA(Thr) + AMP + diphosphate + H(+). Functionally, catalyzes the attachment of threonine to tRNA(Thr) in a two-step reaction: L-threonine is first activated by ATP to form Thr-AMP and then transferred to the acceptor end of tRNA(Thr). Also edits incorrectly charged L-seryl-tRNA(Thr). The sequence is that of Threonine--tRNA ligase from Hamiltonella defensa subsp. Acyrthosiphon pisum (strain 5AT).